The sequence spans 145 residues: Large ribosomal subunit protein uL15 (145 aa).

The disordered stretch occupies residues 1 to 58 (MFNLLKPKGASKRRKIVGRGPGSGLGKTSGRGQKGQKARNTSPRLGFEGGQTPLYRRL). Gly residues predominate over residues 19–33 (RGPGSGLGKTSGRGQ).

The protein belongs to the universal ribosomal protein uL15 family. As to quaternary structure, part of the 50S ribosomal subunit.

In terms of biological role, binds to the 23S rRNA. This Borrelia garinii subsp. bavariensis (strain ATCC BAA-2496 / DSM 23469 / PBi) (Borreliella bavariensis) protein is Large ribosomal subunit protein uL15.